The chain runs to 56 residues: MAVQQNKKSRSRRDMRRSHDALTTAAVSVDKASGETHLRHHVTADGYYRGRKVINK.

Residues 1 to 37 (MAVQQNKKSRSRRDMRRSHDALTTAAVSVDKASGETH) form a disordered region. Basic residues predominate over residues 7-16 (KKSRSRRDMR).

Belongs to the bacterial ribosomal protein bL32 family.

This Haemophilus influenzae (strain PittEE) protein is Large ribosomal subunit protein bL32.